Consider the following 301-residue polypeptide: 4-hydroxy-tetrahydrodipicolinate synthase (301 aa).

Thr53 serves as a coordination point for pyruvate. The active-site Proton donor/acceptor is Tyr142. Lys170 acts as the Schiff-base intermediate with substrate in catalysis. Val212 contributes to the pyruvate binding site.

The protein belongs to the DapA family. In terms of assembly, homotetramer; dimer of dimers.

Its subcellular location is the cytoplasm. The enzyme catalyses L-aspartate 4-semialdehyde + pyruvate = (2S,4S)-4-hydroxy-2,3,4,5-tetrahydrodipicolinate + H2O + H(+). Its pathway is amino-acid biosynthesis; L-lysine biosynthesis via DAP pathway; (S)-tetrahydrodipicolinate from L-aspartate: step 3/4. Its function is as follows. Catalyzes the condensation of (S)-aspartate-beta-semialdehyde [(S)-ASA] and pyruvate to 4-hydroxy-tetrahydrodipicolinate (HTPA). The protein is 4-hydroxy-tetrahydrodipicolinate synthase of Synechocystis sp. (strain ATCC 27184 / PCC 6803 / Kazusa).